We begin with the raw amino-acid sequence, 392 residues long: Probable tRNA sulfurtransferase (392 aa).

In terms of domain architecture, THUMP spans 61-168 (DEALKLLSKV…EFTYIYSEII (108 aa)). Residues 185–186 (LL), 210–211 (HF), Arg-267, Gly-289, and Gln-298 each bind ATP.

This sequence belongs to the ThiI family.

Its subcellular location is the cytoplasm. The enzyme catalyses [ThiI sulfur-carrier protein]-S-sulfanyl-L-cysteine + a uridine in tRNA + 2 reduced [2Fe-2S]-[ferredoxin] + ATP + H(+) = [ThiI sulfur-carrier protein]-L-cysteine + a 4-thiouridine in tRNA + 2 oxidized [2Fe-2S]-[ferredoxin] + AMP + diphosphate. The catalysed reaction is [ThiS sulfur-carrier protein]-C-terminal Gly-Gly-AMP + S-sulfanyl-L-cysteinyl-[cysteine desulfurase] + AH2 = [ThiS sulfur-carrier protein]-C-terminal-Gly-aminoethanethioate + L-cysteinyl-[cysteine desulfurase] + A + AMP + 2 H(+). Its pathway is cofactor biosynthesis; thiamine diphosphate biosynthesis. Catalyzes the ATP-dependent transfer of a sulfur to tRNA to produce 4-thiouridine in position 8 of tRNAs, which functions as a near-UV photosensor. Also catalyzes the transfer of sulfur to the sulfur carrier protein ThiS, forming ThiS-thiocarboxylate. This is a step in the synthesis of thiazole, in the thiamine biosynthesis pathway. The sulfur is donated as persulfide by IscS. The protein is Probable tRNA sulfurtransferase of Acetivibrio thermocellus (strain ATCC 27405 / DSM 1237 / JCM 9322 / NBRC 103400 / NCIMB 10682 / NRRL B-4536 / VPI 7372) (Clostridium thermocellum).